The sequence spans 142 residues: MSMKSHLELFKQKKSTAYILLTVLFGIGWATLDLPVMVAMNIRPSISMRPIKPYISWLDSLLKPLPFNSAFGTNSTAHVDLREFLLFIGLNTSPCVSETIAIFLVCCFDRSIFIATEYLFLILLPLRGLCHQFCEQKYVETI.

Helical transmembrane passes span 19–39, 84–104, and 111–131; these read ILLT…VMVA, FLLF…AIFL, and SIFI…GLCH.

The protein resides in the membrane. Functionally, identified in a screen for mutants with decreased levels of rDNA transcription. This chain is Putative regulator of rDNA transcription protein 16 (RRT16), found in Saccharomyces cerevisiae (strain ATCC 204508 / S288c) (Baker's yeast).